Consider the following 318-residue polypeptide: Protoheme IX farnesyltransferase (318 aa).

The next 9 membrane-spanning stretches (helical) occupy residues 37-57 (LVIF…HPVI), 58-78 (AFTA…LNMW), 100-120 (VTAR…VMTM), 122-142 (VLVN…YLVV), 155-175 (IVIG…AVTG), 182-202 (FVLF…LALY), 228-248 (IMLY…LGFA), 251-271 (LYMG…FGIW), and 291-311 (ILYL…GLGG).

It belongs to the UbiA prenyltransferase family. Protoheme IX farnesyltransferase subfamily.

It is found in the cell inner membrane. The enzyme catalyses heme b + (2E,6E)-farnesyl diphosphate + H2O = Fe(II)-heme o + diphosphate. Its pathway is porphyrin-containing compound metabolism; heme O biosynthesis; heme O from protoheme: step 1/1. Converts heme B (protoheme IX) to heme O by substitution of the vinyl group on carbon 2 of heme B porphyrin ring with a hydroxyethyl farnesyl side group. This is Protoheme IX farnesyltransferase from Parvibaculum lavamentivorans (strain DS-1 / DSM 13023 / NCIMB 13966).